A 1479-amino-acid polypeptide reads, in one-letter code: Type VII secretion system protein EssC (1479 aa).

Topologically, residues 1-229 are cytoplasmic; that stretch reads MHKLIIKYNK…RPPQPIQKNN (229 aa). The chain crosses the membrane as a helical span at residues 230-252; the sequence is TVIWRSIIPPLVMIALTVVIFLV. At 253 to 256 the chain is on the extracellular side; sequence RPIG. Residues 257–279 form a helical membrane-spanning segment; that stretch reads IYILMMIGMSSVTIVFGITTYFS. Over 280–1479 the chain is Cytoplasmic; the sequence is EKKKYNKDVE…QAYQKIRWFK (1200 aa). FtsK domains are found at residues 652-846 and 997-1183; these read DDIL…QDSN and QGPM…SEVS. ATP contacts are provided by residues 672 to 679 and 1014 to 1021; these read GTTGSGKS and GSPGYGRT.

The protein belongs to the EssC family. As to quaternary structure, homooligomer. Interacts with EsaE.

The protein resides in the cell membrane. Its function is as follows. Component of the type VII secretion system (Ess). Required for the secretion of substrates including EsxA and EsxB. However, unable to support secretion of the substrate protein EsxC. The protein is Type VII secretion system protein EssC of Staphylococcus aureus (strain MSSA476).